A 465-amino-acid polypeptide reads, in one-letter code: Cysteine--tRNA ligase (465 aa).

A Zn(2+)-binding site is contributed by C27. The short motif at 29–39 is the 'HIGH' region element; sequence PTVYNFFHIGN. Zn(2+) contacts are provided by C207, H232, and E236. The 'KMSKS' region signature appears at 264–268; the sequence is KMSKS. ATP is bound at residue K267.

This sequence belongs to the class-I aminoacyl-tRNA synthetase family. As to quaternary structure, monomer. Requires Zn(2+) as cofactor.

The protein localises to the cytoplasm. The catalysed reaction is tRNA(Cys) + L-cysteine + ATP = L-cysteinyl-tRNA(Cys) + AMP + diphosphate. In Clostridium botulinum (strain Okra / Type B1), this protein is Cysteine--tRNA ligase.